Consider the following 331-residue polypeptide: MENPSPAAALGKALCALLLATLGAAGQPLGGESICSARALAKYSITFTGKWSQTAFPKQYPLFRPPAQWSSLLGAAHSSDYSMWRKNQYVSNGLRDFAERGEAWALMKEIEAAGEALQSVHAVFSAPAVPSGTGQTSAELEVQRRHSLVSFVVRIVPSPDWFVGVDSLDLCDGDRWREQAALDLYPYDAGTDSGFTFSSPNFATIPQDTVTEITSSSPSHPANSFYYPRLKALPPIARVTLVRLRQSPRAFIPPAPVLPSRDNEIVDSASVPETPLDCEVSLWSSWGLCGGHCGRLGTKSRTRYVRVQPANNGSPCPELEEEAECVPDNCV.

Positions 1-26 (MENPSPAAALGKALCALLLATLGAAG) are cleaved as a signal peptide. The Spondin domain occupies 31-221 (GESICSARAL…EITSSSPSHP (191 aa)). A disulfide bridge connects residues Cys35 and Cys171. Glu141 is a binding site for a divalent metal cation. The Ca(2+) site is built by Asp160, Asp188, and Asp192. Positions 277-331 (DCEVSLWSSWGLCGGHCGRLGTKSRTRYVRVQPANNGSPCPELEEEAECVPDNCV) constitute a TSP type-1 domain. A C-linked (Man) tryptophan glycan is attached at Trp283.

Monomer. Interacts with integrin. Expressed in normal lung tissue but not in lung carcinoma cell lines.

Its subcellular location is the secreted. The protein localises to the extracellular space. The protein resides in the extracellular matrix. In terms of biological role, cell adhesion protein that promotes adhesion and outgrowth of hippocampal embryonic neurons. Binds directly to bacteria and their components and functions as an opsonin for macrophage phagocytosis of bacteria. Essential in the initiation of the innate immune response and represents a unique pattern-recognition molecule in the ECM for microbial pathogens. Binds bacterial lipopolysaccharide (LPS). This is Spondin-2 (SPON2) from Homo sapiens (Human).